The chain runs to 462 residues: tRNA modification GTPase MnmE (462 aa).

Positions 23, 88, and 127 each coordinate (6S)-5-formyl-5,6,7,8-tetrahydrofolate. A TrmE-type G domain is found at 224 to 383; it reads GLATVIIGRP…LEKAIADLFF (160 aa). Residue asparagine 234 participates in K(+) binding. GTP-binding positions include 234–239, 253–259, and 278–281; these read NVGKSS, TDIPGTT, and DTAG. Serine 238 is a Mg(2+) binding site. The K(+) site is built by threonine 253, isoleucine 255, and threonine 258. Threonine 259 contributes to the Mg(2+) binding site. (6S)-5-formyl-5,6,7,8-tetrahydrofolate is bound at residue lysine 462.

The protein belongs to the TRAFAC class TrmE-Era-EngA-EngB-Septin-like GTPase superfamily. TrmE GTPase family. Homodimer. Heterotetramer of two MnmE and two MnmG subunits. Requires K(+) as cofactor.

It localises to the cytoplasm. Exhibits a very high intrinsic GTPase hydrolysis rate. Involved in the addition of a carboxymethylaminomethyl (cmnm) group at the wobble position (U34) of certain tRNAs, forming tRNA-cmnm(5)s(2)U34. This is tRNA modification GTPase MnmE from Geobacillus thermodenitrificans (strain NG80-2).